A 784-amino-acid polypeptide reads, in one-letter code: LPS-assembly protein LptD (784 aa).

An N-terminal signal peptide occupies residues 1–24; it reads MKKRIPTLLATMIASALYSHQGLA. Intrachain disulfides connect C31-C724 and C173-C725.

The protein belongs to the LptD family. In terms of assembly, component of the lipopolysaccharide transport and assembly complex. Interacts with LptE and LptA. Contains two intramolecular disulfide bonds.

The protein localises to the cell outer membrane. Together with LptE, is involved in the assembly of lipopolysaccharide (LPS) at the surface of the outer membrane. This chain is LPS-assembly protein LptD, found in Salmonella paratyphi A (strain ATCC 9150 / SARB42).